Reading from the N-terminus, the 574-residue chain is Ankyrin repeat protein B18 (574 aa).

ANK repeat units lie at residues 56-87 (TGYTALHCYLYNNYFTNDVLKVLLNHGVDVTI), 135-164 (IKSRYMLLKEEDIDENIVSTLLDKGIDPNF), 167-213 (DGYT…NLNA), 217-249 (CGNTPFHLYLSIEMCNNIHMTKMLLTFNPNFEI), 253-285 (HGLTPILCYITSDYIQHDILVMLIHHYETNVGE), and 327-356 (EGKTLLHIACEYNNTHVIDYLIRINGDINA). The 34-residue stretch at 541–574 (KCLLTLLPSEIIYEILYMLTIYDLYNISYPPTKV) folds into the F-box domain.

This chain is Ankyrin repeat protein B18, found in Variola virus (isolate Human/India/Ind3/1967) (VARV).